The primary structure comprises 80 residues: U19-lycotoxin-Ls1b (80 aa).

Residues 1–22 (MSPKVQALIFIVGLITLLAAHA) form the signal peptide. A propeptide spanning residues 23–34 (QEELSDNIESER) is cleaved from the precursor. Intrachain disulfides connect cysteine 36/cysteine 50, cysteine 43/cysteine 55, cysteine 49/cysteine 66, and cysteine 57/cysteine 64.

The protein belongs to the neurotoxin 02 (plectoxin) family. 05 (U19-lycotoxin) subfamily. As to expression, expressed by the venom gland.

It is found in the secreted. The polypeptide is U19-lycotoxin-Ls1b (Lycosa singoriensis (Wolf spider)).